The following is a 97-amino-acid chain: Peptide YY-A (97 aa).

Residues 1–28 (MAVMLKPWTVVATVLICVLLCLGTFVDA) form the signal peptide. Y64 carries the post-translational modification Tyrosine amide. The propeptide at 68 to 97 (STSEDVMAELLFGDDTEHKQRSRYDDSFMW) is C-terminal extension.

The protein belongs to the NPY family. Mainly expressed in brainstem neurons, and in the telencephalon. Also expressed in intestinal endocrine cells.

It is found in the secreted. This chain is Peptide YY-A (pyya), found in Danio rerio (Zebrafish).